A 631-amino-acid chain; its full sequence is ATP-dependent RNA helicase mrh4, mitochondrial (631 aa).

Residues Met1 to Arg45 constitute a mitochondrion transit peptide. The segment at Lys68–Pro111 is disordered. Basic and acidic residues predominate over residues Arg98 to Lys108. Positions Thr141–Arg174 match the Q motif motif. The span at Leu180 to Ala193 shows a compositional bias: basic and acidic residues. Residues Leu180–Gln199 form a disordered region. Residues Asp194–Leu406 enclose the Helicase ATP-binding domain. Ala207–Thr214 contributes to the ATP binding site. The tract at residues Glu229 to Glu249 is disordered. Residues Asp353–Asp356 carry the DEAD box motif. The Helicase C-terminal domain occupies Gly455–Ile631.

This sequence belongs to the DEAD box helicase family. MRH4 subfamily.

It localises to the mitochondrion. The catalysed reaction is ATP + H2O = ADP + phosphate + H(+). ATP-binding RNA helicase involved in mitochondrial RNA metabolism. Required for maintenance of mitochondrial DNA. This chain is ATP-dependent RNA helicase mrh4, mitochondrial (mrh4), found in Neosartorya fischeri (strain ATCC 1020 / DSM 3700 / CBS 544.65 / FGSC A1164 / JCM 1740 / NRRL 181 / WB 181) (Aspergillus fischerianus).